The chain runs to 210 residues: Oxygen-insensitive NADPH nitroreductase (210 aa).

G150–G155 contributes to the NADP(+) binding site.

Belongs to the nitroreductase family.

Its function is as follows. Reduction of a variety of nitroaromatic compounds using NADPH as source of reducing equivalents; two electrons are transferred. In Helicobacter acinonychis (strain Sheeba), this protein is Oxygen-insensitive NADPH nitroreductase (rdxA).